Reading from the N-terminus, the 332-residue chain is Cytoplasmic phosphatidylinositol transfer protein 1 (332 aa).

Phosphoserine is present on residues Ser119, Ser270, and Ser274. Low complexity predominate over residues 267–285 (SVRSAPSSAPSTPLSTDAP). The segment at 267–332 (SVRSAPSSAP…SDKPCRPKSE (66 aa)) is disordered. Residue Thr278 is modified to Phosphothreonine. Positions 322 to 332 (SSDKPCRPKSE) are enriched in basic and acidic residues.

It belongs to the PtdIns transfer protein family. PI transfer class IIB subfamily. Ubiquitously expressed.

The protein resides in the cytoplasm. It catalyses the reaction a 1,2-diacyl-sn-glycero-3-phospho-(1D-myo-inositol)(in) = a 1,2-diacyl-sn-glycero-3-phospho-(1D-myo-inositol)(out). The catalysed reaction is a 1,2-diacyl-sn-glycero-3-phosphate(in) = a 1,2-diacyl-sn-glycero-3-phosphate(out). Catalyzes the transfer of phosphatidylinositol (PI) and phosphatidic acid (PA) between membranes. Binds PA derived from the phospholipase D signaling pathway and among the cellular PA species, preferably binds to the C16:0/16:1 and C16:1/18:1 PA species. In terms of biological role, catalyzes the transfer of phosphatidylinositol between membranes. The chain is Cytoplasmic phosphatidylinositol transfer protein 1 (PITPNC1) from Homo sapiens (Human).